Reading from the N-terminus, the 488-residue chain is MEVVTVALIAVIISSILYLLFGSSGHKNLPPGPKPWPIVGNLLQLGEKPHAQFAELAQTYGDIFTLKMGTETVVVASTSSAASEILKTHDRILSARYVFQSFRVKGHVENSIVWSDCTETWKNLRKVCRTELFTQKMIESQAHVREKKCEEMVEYLMKKQGEEVKIVEVIFGTLVNIFGNLIFSQNIFELGXPNSGSSEFKEYLWRMLELGNSTNPADYFPMLGKFDLFGQRKEVAECLKGIYAIWGAMLQERKLAKKVDGYQSKNDFVDVCLDSGLNDYQINALLMELFGAGTETSASTIEWAMTELTKNPKITAKLRSELQTVVGERSVKESDFPNLPYLEATVKETLRLHPPTPLLLPRRALETCTILNYTIPKDCQIMVNAWGIGRDPKTWIDPLTFSPERFLNSSVDFRGNDFSLIPFGAGRRICPGLPIANQFIALLVATFVQNLDWCLPNGMSVDHLIVEEKFGLTLQKEPPLFIVPKSRV.

A helical membrane pass occupies residues 3–23 (VVTVALIAVIISSILYLLFGS). C430 contacts heme.

It belongs to the cytochrome P450 family. Heme is required as a cofactor.

The protein localises to the endoplasmic reticulum membrane. It is found in the microsome membrane. It catalyses the reaction (S)-N-methylcoclaurine + reduced [NADPH--hemoprotein reductase] + O2 = (S)-3'-hydroxy-N-methylcoclaurine + oxidized [NADPH--hemoprotein reductase] + H2O + H(+). The protein operates within alkaloid biosynthesis; (S)-reticuline biosynthesis; (S)-reticuline from (S)-norcoclaurine: step 3/4. Functionally, 3'-hydroxylation of (S)-N-methylcoclaurine. The chain is (S)-N-methylcoclaurine 3'-hydroxylase isozyme 2 (CYP80B2) from Eschscholzia californica (California poppy).